A 200-amino-acid chain; its full sequence is Dephospho-CoA kinase (200 aa).

A DPCK domain is found at 4-200 (TIGLTGSVAT…TFIKRFVKNK (197 aa)). 12–17 (ATGKST) contacts ATP.

This sequence belongs to the CoaE family.

It is found in the cytoplasm. It carries out the reaction 3'-dephospho-CoA + ATP = ADP + CoA + H(+). Its pathway is cofactor biosynthesis; coenzyme A biosynthesis; CoA from (R)-pantothenate: step 5/5. Its function is as follows. Catalyzes the phosphorylation of the 3'-hydroxyl group of dephosphocoenzyme A to form coenzyme A. The protein is Dephospho-CoA kinase of Listeria monocytogenes serotype 4b (strain F2365).